The chain runs to 449 residues: Naphthalene 1,2-dioxygenase system, large oxygenase component (449 aa).

The Rieske domain occupies 39 to 137 (WLFLTHDSLI…LDKKCMGLKE (99 aa)). Positions 81, 83, 101, and 104 each coordinate [2Fe-2S] cluster. Residues H208, H213, and D362 each contribute to the Fe cation site.

This sequence belongs to the bacterial ring-hydroxylating dioxygenase alpha subunit family. As to quaternary structure, the naphthalene dioxygenase (NDO) multicomponent enzyme system is composed of an electron transfer component and a dioxygenase component (iron sulfur protein (ISP)). The electron transfer component is composed of a ferredoxin reductase (NdoR) and a ferredoxin (NdoA), and the dioxygenase component is formed of a heterohexamer (trimer of heterodimers) of three large alpha subunits (NdoB) and three small beta subunits (NdoC). [2Fe-2S] cluster is required as a cofactor. Fe(2+) serves as cofactor.

The catalysed reaction is naphthalene + NADH + O2 + H(+) = (1R,2S)-1,2-dihydronaphthalene-1,2-diol + NAD(+). The protein operates within aromatic compound metabolism; naphthalene degradation. In terms of biological role, component of the naphthalene dioxygenase (NDO) multicomponent enzyme system which catalyzes the incorporation of both atoms of molecular oxygen into naphthalene to form cis-(1R,2S)-dihydroxy-1,2-dihydronaphthalene. The alpha subunit has a catalytic role in the holoenzyme. This Pseudomonas aeruginosa protein is Naphthalene 1,2-dioxygenase system, large oxygenase component.